The following is a 59-amino-acid chain: MKFLLFLSVALLLTSFIETVTVNKAGMERPSRALVGRGCPAECPDTCSSSGSCAPDFIG.

The signal sequence occupies residues 1 to 19 (MKFLLFLSVALLLTSFIET). A propeptide spanning residues 20–36 (VTVNKAGMERPSRALVG) is cleaved from the precursor. Position 58 is an isoleucine amide (Ile58).

Contains 2 disulfide bonds. In terms of tissue distribution, expressed by the venom duct.

Its subcellular location is the secreted. The protein is Conotoxin Cl14.4 of Californiconus californicus (California cone).